Here is a 311-residue protein sequence, read N- to C-terminus: Endosome-associated-trafficking regulator 1 (311 aa).

Positions 167–278 (RGNAENGTKN…KSENERLRLG (112 aa)) form a coiled coil.

Belongs to the ENTR1 family.

It is found in the cytoplasm. Its subcellular location is the early endosome. The protein localises to the endosome. It localises to the recycling endosome. The protein resides in the midbody. It is found in the cytoskeleton. Its subcellular location is the microtubule organizing center. The protein localises to the centrosome. It localises to the cilium basal body. Endosome-associated protein that plays a role in membrane receptor sorting, cytokinesis and ciliogenesis. The chain is Endosome-associated-trafficking regulator 1 from Danio rerio (Zebrafish).